The sequence spans 245 residues: Ribosomal RNA small subunit methyltransferase G (245 aa).

Residues glycine 85, phenylalanine 90, 108-110, 136-137, and arginine 155 each bind S-adenosyl-L-methionine; these read DST and AE.

This sequence belongs to the methyltransferase superfamily. RNA methyltransferase RsmG family.

It localises to the cytoplasm. Its function is as follows. Specifically methylates the N7 position of a guanine in 16S rRNA. The protein is Ribosomal RNA small subunit methyltransferase G of Nostoc sp. (strain PCC 7120 / SAG 25.82 / UTEX 2576).